A 366-amino-acid chain; its full sequence is Peptide chain release factor 1 (366 aa).

Q239 carries the N5-methylglutamine modification.

Belongs to the prokaryotic/mitochondrial release factor family. In terms of processing, methylated by PrmC. Methylation increases the termination efficiency of RF1.

It is found in the cytoplasm. In terms of biological role, peptide chain release factor 1 directs the termination of translation in response to the peptide chain termination codons UAG and UAA. This Albidiferax ferrireducens (strain ATCC BAA-621 / DSM 15236 / T118) (Rhodoferax ferrireducens) protein is Peptide chain release factor 1.